The following is a 559-amino-acid chain: U-box domain-containing protein 41 (559 aa).

Disordered stretches follow at residues 1–30 and 121–156; these read MGGN…KHDE and RMDK…SPSD. Positions 12–24 are enriched in polar residues; it reads HQRSSSATTTTLP. Residues 30-104 form the U-box domain; that stretch reads ETPPEFLCPI…FSWCDRQKVD (75 aa). 5 ARM repeats span residues 266–305, 307–346, 348–388, 390–427, and 428–472; these read EDLR…NLSL, KQNK…SLAL, DENK…HLSL, PSNR…NLAA, and CPDG…TLCQ.

It carries out the reaction S-ubiquitinyl-[E2 ubiquitin-conjugating enzyme]-L-cysteine + [acceptor protein]-L-lysine = [E2 ubiquitin-conjugating enzyme]-L-cysteine + N(6)-ubiquitinyl-[acceptor protein]-L-lysine.. Its pathway is protein modification; protein ubiquitination. Functions as an E3 ubiquitin ligase. In Arabidopsis thaliana (Mouse-ear cress), this protein is U-box domain-containing protein 41 (PUB41).